The sequence spans 334 residues: Beta-hexosaminidase (334 aa).

Substrate-binding positions include D57, R65, R128, and K158 to H159. H171 functions as the Proton donor/acceptor in the catalytic mechanism. Catalysis depends on D242, which acts as the Nucleophile.

Belongs to the glycosyl hydrolase 3 family. NagZ subfamily.

It is found in the cytoplasm. It carries out the reaction Hydrolysis of terminal non-reducing N-acetyl-D-hexosamine residues in N-acetyl-beta-D-hexosaminides.. It functions in the pathway cell wall biogenesis; peptidoglycan recycling. In terms of biological role, plays a role in peptidoglycan recycling by cleaving the terminal beta-1,4-linked N-acetylglucosamine (GlcNAc) from peptide-linked peptidoglycan fragments, giving rise to free GlcNAc, anhydro-N-acetylmuramic acid and anhydro-N-acetylmuramic acid-linked peptides. The protein is Beta-hexosaminidase of Methylococcus capsulatus (strain ATCC 33009 / NCIMB 11132 / Bath).